The sequence spans 623 residues: Transketolase (623 aa).

M1 bears the N-acetylmethionine mark. N6-acetyllysine is present on residues K6 and K11. H37 is a binding site for substrate. Residues S40 and H77 each contribute to the thiamine diphosphate site. S104 carries the post-translational modification Phosphoserine. Residue 123–125 (GSL) coordinates thiamine diphosphate. An N6-acetyllysine modification is found at K144. A Mg(2+)-binding site is contributed by D155. 2 residues coordinate thiamine diphosphate: G156 and N185. Mg(2+)-binding residues include N185 and L187. N6-acetyllysine is present on residues K204, K232, and K241. Residues K244 and H258 each contribute to the thiamine diphosphate site. H258 lines the substrate pocket. Position 260 is an N6-acetyllysine (K260). Phosphotyrosine is present on Y275. T287 bears the Phosphothreonine mark. S295 is subject to Phosphoserine. A substrate-binding site is contributed by R318. A Glycyl lysine isopeptide (Lys-Gly) (interchain with G-Cter in SUMO2) cross-link involves residue K352. The active-site Proton donor is the E366. F392 serves as a coordination point for thiamine diphosphate. Residues H416 and D424 each coordinate substrate. Q428 serves as a coordination point for thiamine diphosphate. R474 serves as a coordination point for substrate. K538 and K603 each carry N6-acetyllysine.

Belongs to the transketolase family. Homodimer. Mg(2+) serves as cofactor. The cofactor is Ca(2+). It depends on Mn(2+) as a cofactor. Co(2+) is required as a cofactor. Requires thiamine diphosphate as cofactor.

The catalysed reaction is D-sedoheptulose 7-phosphate + D-glyceraldehyde 3-phosphate = aldehydo-D-ribose 5-phosphate + D-xylulose 5-phosphate. Catalyzes the transfer of a two-carbon ketol group from a ketose donor to an aldose acceptor, via a covalent intermediate with the cofactor thiamine pyrophosphate. This Pongo abelii (Sumatran orangutan) protein is Transketolase (TKT).